The sequence spans 178 residues: Inorganic pyrophosphatase (178 aa).

Substrate contacts are provided by K30, R44, and Y56. Mg(2+)-binding residues include D66, D71, and D103. Y140 is a substrate binding site.

This sequence belongs to the PPase family. Homohexamer. It depends on Mg(2+) as a cofactor.

The protein resides in the cytoplasm. The enzyme catalyses diphosphate + H2O = 2 phosphate + H(+). Catalyzes the hydrolysis of inorganic pyrophosphate (PPi) forming two phosphate ions. The protein is Inorganic pyrophosphatase of Pyrococcus abyssi (strain GE5 / Orsay).